A 394-amino-acid polypeptide reads, in one-letter code: Saposin-like protein 11 (394 aa).

The signal sequence occupies residues 1–18 (MSVFRFLLFLSLLVGSNA). N-linked (GlcNAc...) asparagine glycosylation is found at Asn25 and Asn272. In terms of domain architecture, Saposin B-type spans 306–394 (GNMVCDICEK…SFCKHVPFCK (89 aa)). 3 disulfide bridges follow: Cys310/Cys393, Cys313/Cys387, and Cys343/Cys359.

This chain is Saposin-like protein 11 (spp-11), found in Caenorhabditis elegans.